The chain runs to 371 residues: Putative phosphoserine aminotransferase (371 aa).

Residue R45 coordinates L-glutamate. F103, T149, D171, and Q194 together coordinate pyridoxal 5'-phosphate. K195 bears the N6-(pyridoxal phosphate)lysine mark. 246 to 247 (NT) contacts pyridoxal 5'-phosphate.

This sequence belongs to the class-V pyridoxal-phosphate-dependent aminotransferase family. SerC subfamily. As to quaternary structure, homodimer. Requires pyridoxal 5'-phosphate as cofactor.

The protein resides in the cytoplasm. It catalyses the reaction O-phospho-L-serine + 2-oxoglutarate = 3-phosphooxypyruvate + L-glutamate. It carries out the reaction 4-(phosphooxy)-L-threonine + 2-oxoglutarate = (R)-3-hydroxy-2-oxo-4-phosphooxybutanoate + L-glutamate. The protein operates within amino-acid biosynthesis; L-serine biosynthesis; L-serine from 3-phospho-D-glycerate: step 2/3. It participates in cofactor biosynthesis; pyridoxine 5'-phosphate biosynthesis; pyridoxine 5'-phosphate from D-erythrose 4-phosphate: step 3/5. Its function is as follows. Catalyzes the reversible conversion of 3-phosphohydroxypyruvate to phosphoserine and of 3-hydroxy-2-oxo-4-phosphonooxybutanoate to phosphohydroxythreonine. This chain is Putative phosphoserine aminotransferase, found in Mycolicibacterium vanbaalenii (strain DSM 7251 / JCM 13017 / BCRC 16820 / KCTC 9966 / NRRL B-24157 / PYR-1) (Mycobacterium vanbaalenii).